The primary structure comprises 491 residues: Carbohydrate ABC transporter substrate-binding protein (491 aa).

Positions 212, 247, 252, and 256 each coordinate Zn(2+).

Belongs to the bacterial solute-binding protein 1 family. In terms of assembly, exists as a monomer, homodimer, homotrimer and homotetramer; oligomerization increases with higher protein concentration.

Its subcellular location is the cell surface. Probably part of an ABC transporter complex involved in carbohydrate transport. The polypeptide is Carbohydrate ABC transporter substrate-binding protein (Streptococcus pneumoniae serotype 4 (strain ATCC BAA-334 / TIGR4)).